The following is a 311-amino-acid chain: Probable deoxyhypusine synthase (311 aa).

Residue K284 is the Nucleophile of the active site.

It belongs to the deoxyhypusine synthase family. NAD(+) serves as cofactor.

It carries out the reaction [eIF5A protein]-L-lysine + spermidine = [eIF5A protein]-deoxyhypusine + propane-1,3-diamine. It participates in protein modification; eIF5A hypusination. Functionally, catalyzes the NAD-dependent oxidative cleavage of spermidine and the subsequent transfer of the butylamine moiety of spermidine to the epsilon-amino group of a specific lysine residue of the eIF-5A precursor protein to form the intermediate deoxyhypusine residue. This is Probable deoxyhypusine synthase from Picrophilus torridus (strain ATCC 700027 / DSM 9790 / JCM 10055 / NBRC 100828 / KAW 2/3).